The primary structure comprises 433 residues: MTDFFAGIPQIRYEGEGSSNEFAYRHYNPDEMILGKRMEDHLRFAVAWWHSFAWPGGDPFGAQTLERPWFGDTLDLARMKADVAFEMFEILGAPFFCFHDADIRPEGATFAESKRNLEAIVDHIGARMERSKTRLLWGTANLFSHRRFMSGAATNPDPDVFAWSAATVKACMDATKKLGGANYVLWGGREGYETLLNTDLKREAEQAGRFLQMVVDYKYKIGFEGTILIEPKPQEPSKHQYDYDVATVYGFLKRFGLENEVKLNVEQGHAILAGHSFEHELALAASLGILGSIDMNRNDYQSGWDTDQFPNNHPEMALAYYEVLRAGGFTTGGTNFDAKIRRQSLDPEDLILAHVGGMDTCARALKAAARLYEDGSLERARADRYAGWETPEAKAMLSSSLEEIEARVLAEDINPQPRSGRQERLENLWNRFV.

Residues H99 and D102 contribute to the active site. Mg(2+) contacts are provided by E230, E266, H269, D294, D305, D307, and D337.

The protein belongs to the xylose isomerase family. As to quaternary structure, homotetramer. It depends on Mg(2+) as a cofactor.

It localises to the cytoplasm. It catalyses the reaction alpha-D-xylose = alpha-D-xylulofuranose. The polypeptide is Xylose isomerase (Cereibacter sphaeroides (strain ATCC 17025 / ATH 2.4.3) (Rhodobacter sphaeroides)).